The chain runs to 322 residues: Beta-ketoacyl-[acyl-carrier-protein] synthase III (322 aa).

Catalysis depends on residues Cys-112 and His-249. Residues 250-254 (QANQR) are ACP-binding. Asn-279 is a catalytic residue.

The protein belongs to the thiolase-like superfamily. FabH family. Homodimer.

The protein localises to the cytoplasm. The catalysed reaction is malonyl-[ACP] + acetyl-CoA + H(+) = 3-oxobutanoyl-[ACP] + CO2 + CoA. The protein operates within lipid metabolism; fatty acid biosynthesis. Functionally, catalyzes the condensation reaction of fatty acid synthesis by the addition to an acyl acceptor of two carbons from malonyl-ACP. Catalyzes the first condensation reaction which initiates fatty acid synthesis and may therefore play a role in governing the total rate of fatty acid production. Possesses both acetoacetyl-ACP synthase and acetyl transacylase activities. Its substrate specificity determines the biosynthesis of branched-chain and/or straight-chain of fatty acids. The sequence is that of Beta-ketoacyl-[acyl-carrier-protein] synthase III from Caulobacter vibrioides (strain ATCC 19089 / CIP 103742 / CB 15) (Caulobacter crescentus).